The following is a 111-amino-acid chain: U-scoloptoxin(16)-Sm2a (111 aa).

The N-terminal stretch at 1–28 (MCAKPNHLFVTVTFIFGFAVCIVQISAW) is a signal peptide.

The protein belongs to the scoloptoxin-16 family. Post-translationally, contains 4 disulfide bonds. As to expression, expressed by the venom gland.

The protein localises to the secreted. This Scolopendra morsitans (Tanzanian blue ringleg centipede) protein is U-scoloptoxin(16)-Sm2a.